Consider the following 354-residue polypeptide: Protein C42 (354 aa).

A Nuclear localization signal motif is present at residues 349–352 (KRKK).

The protein belongs to the baculoviridae C42 protein family.

It is found in the host nucleus. The polypeptide is Protein C42 (Orgyia pseudotsugata (Douglas-fir tussock moth)).